The chain runs to 510 residues: NAD(P)H-quinone oxidoreductase subunit 2 A, chloroplastic (510 aa).

Helical transmembrane passes span 24-44 (LLLF…GLIL), 57-77 (TPWL…ALLF), 99-119 (IFQF…VEYI), 124-144 (MAIT…MFLC), 149-169 (LITI…LSGY), 183-203 (YLLM…WLYG), 229-249 (ISIA…PAPF), 295-315 (WHLL…LIAI), 323-343 (MLAY…IVGD), 354-374 (YMLF…LFGL), 395-415 (ALSS…AGFF), 418-438 (LYLF…IGLL), and 484-504 (MIVC…IIAI).

This sequence belongs to the complex I subunit 2 family. As to quaternary structure, NDH is composed of at least 16 different subunits, 5 of which are encoded in the nucleus.

It is found in the plastid. The protein resides in the chloroplast thylakoid membrane. The catalysed reaction is a plastoquinone + NADH + (n+1) H(+)(in) = a plastoquinol + NAD(+) + n H(+)(out). It carries out the reaction a plastoquinone + NADPH + (n+1) H(+)(in) = a plastoquinol + NADP(+) + n H(+)(out). In terms of biological role, NDH shuttles electrons from NAD(P)H:plastoquinone, via FMN and iron-sulfur (Fe-S) centers, to quinones in the photosynthetic chain and possibly in a chloroplast respiratory chain. The immediate electron acceptor for the enzyme in this species is believed to be plastoquinone. Couples the redox reaction to proton translocation, and thus conserves the redox energy in a proton gradient. This chain is NAD(P)H-quinone oxidoreductase subunit 2 A, chloroplastic, found in Nuphar advena (Common spatterdock).